The following is a 552-amino-acid chain: Cleavage and polyadenylation specificity factor subunit 6 (552 aa).

Residues 1 to 213 (MADGVDHIDI…RGRFPGAVPG (213 aa)) form a necessary for interaction with NXF1 region. Residues 81 to 161 (IALYIGNLTR…QNPVVTPCNK (81 aa)) form the RRM domain. The necessary for interaction with NUDT21/CPSF5 stretch occupies residues 81–161 (IALYIGNLTR…QNPVVTPCNK (81 aa)). Residues 81–161 (IALYIGNLTR…QNPVVTPCNK (81 aa)) form a necessary for nuclear paraspeckles localization region. Residue threonine 157 is modified to Phosphothreonine. Positions 169-180 (MQSRKTTQSGQM) are enriched in polar residues. Disordered stretches follow at residues 169 to 411 (MQSR…PLSE) and 479 to 552 (GIES…YRHR). The short motif at 202 to 206 (RGRGR) is the GAR element. Over residues 207-219 (FPGAVPGGDRFPG) the composition is skewed to low complexity. Composition is skewed to pro residues over residues 220 to 265 (PTGP…PLAG), 285 to 366 (GQPP…PPPT), and 377 to 388 (GPPPTDPYGRPP). The span at 389–404 (PYDRGDYGPPGREMDT) shows a compositional bias: basic and acidic residues. 2 positions are modified to phosphothreonine: threonine 404 and threonine 407. The segment at 404 to 552 (TARTPLSEAE…RDREREYRHR (149 aa)) is sufficient for nuclear speckle localization. A necessary for RNA-binding region spans residues 405–552 (ARTPLSEAEF…RDREREYRHR (148 aa)). The segment at 481 to 552 (ESKSYGSGSR…RDREREYRHR (72 aa)) is necessary for interaction with SRSF3, SRSF7 and TRA2B/SFRS10. Residues 491-552 (RRERSRERDH…RDREREYRHR (62 aa)) form an arg/Ser-rich domain region. Positions 494–504 (RSRERDHSRSR) are enriched in basic and acidic residues. 5 positions are modified to phosphoserine: serine 495, serine 501, serine 512, serine 514, and serine 526. Residues 505–515 (EKSRRHKSRSR) are compositionally biased toward basic residues. A sufficient for nuclear targeting region spans residues 511–552 (KSRSRDRHDDYYRERSRERERHRDRDRDRDRERDREREYRHR). A compositionally biased stretch (basic and acidic residues) spans 516 to 552 (DRHDDYYRERSRERERHRDRDRDRDRERDREREYRHR).

Belongs to the RRM CPSF6/7 family. Component of the cleavage factor Im (CFIm) complex which is a heterotetramer composed of two subunits of NUDT21/CPSF5 and two subunits of CPSF6 or CPSF7 or a heterodimer of CPSF6 and CPSF7. The cleavage factor Im (CFIm) complex associates with the CPSF and CSTF complexes to promote the assembly of the core mRNA 3'-processing machinery. Associates with the exon junction complex (EJC). Associates with the 80S ribosome particle. Interacts (via the RRM domain) with NUDT21/CPSF5; this interaction is direct and enhances binding to RNA. Interacts (via Arg/Ser-rich domain) with FIP1L1 (preferentially via unphosphorylated form and Arg/Glu/Asp-rich domain); this interaction mediates, at least in part, the interaction between the CFIm and CPSF complexes and may be inhibited by CPSF6 hyper-phosphorylation. Interacts (via N-terminus) with NXF1; this interaction is direct. Interacts with SRSF3. Interacts with SRSF7. Interacts with SNRNP70. Interacts with TRA2B/SFRS10. Interacts with UPF1. Interacts with UPF3B. Interacts with VIRMA. Interacts (via Arg/Ser-rich domain) with TNPO3; promoting nuclear import of CPSF6 independently of its phosphorylation status. Interacts with YTHDC1. Phosphorylated. Phosphorylated in the Arg/Ser-rich domain by SRPK1, in vitro. In terms of processing, symmetrically dimethylated on arginine residues in the GAR motif by PRMT5 in a WDR77- and CLNS1A-dependent manner. Asymmetrically dimethylated on arginine residues in the GAR motif by PRMT1.

It is found in the nucleus. The protein localises to the nucleoplasm. It localises to the nucleus speckle. Its subcellular location is the cytoplasm. Component of the cleavage factor Im (CFIm) complex that functions as an activator of the pre-mRNA 3'-end cleavage and polyadenylation processing required for the maturation of pre-mRNA into functional mRNAs. CFIm contributes to the recruitment of multiprotein complexes on specific sequences on the pre-mRNA 3'-end, so called cleavage and polyadenylation signals (pA signals). Most pre-mRNAs contain multiple pA signals, resulting in alternative cleavage and polyadenylation (APA) producing mRNAs with variable 3'-end formation. The CFIm complex acts as a key regulator of cleavage and polyadenylation site choice during APA through its binding to 5'-UGUA-3' elements localized in the 3'-untranslated region (UTR) for a huge number of pre-mRNAs. CPSF6 enhances NUDT21/CPSF5 binding to 5'-UGUA-3' elements localized upstream of pA signals and promotes RNA looping, and hence activates directly the mRNA 3'-processing machinery. Plays a role in mRNA export. In Pongo abelii (Sumatran orangutan), this protein is Cleavage and polyadenylation specificity factor subunit 6.